A 273-amino-acid chain; its full sequence is Tyrosinase (273 aa).

Residues histidine 38, histidine 54, histidine 63, histidine 190, histidine 194, and histidine 216 each coordinate Cu cation.

It belongs to the tyrosinase family. Requires Cu(2+) as cofactor.

The enzyme catalyses 2 L-dopa + O2 = 2 L-dopaquinone + 2 H2O. It carries out the reaction L-tyrosine + O2 = L-dopaquinone + H2O. In terms of biological role, this is a copper-containing oxidase that functions in the formation of pigments such as melanins and other polyphenolic compounds. The polypeptide is Tyrosinase (melC2) (Streptomyces antibioticus).